We begin with the raw amino-acid sequence, 210 residues long: Orotate phosphoribosyltransferase (210 aa).

5-phospho-alpha-D-ribose 1-diphosphate-binding positions include arginine 97, lysine 101, histidine 103, and 123 to 131 (EDLISTGGS). Serine 127 contacts orotate.

The protein belongs to the purine/pyrimidine phosphoribosyltransferase family. PyrE subfamily. As to quaternary structure, homodimer. Requires Mg(2+) as cofactor.

It carries out the reaction orotidine 5'-phosphate + diphosphate = orotate + 5-phospho-alpha-D-ribose 1-diphosphate. The protein operates within pyrimidine metabolism; UMP biosynthesis via de novo pathway; UMP from orotate: step 1/2. In terms of biological role, catalyzes the transfer of a ribosyl phosphate group from 5-phosphoribose 1-diphosphate to orotate, leading to the formation of orotidine monophosphate (OMP). The sequence is that of Orotate phosphoribosyltransferase from Enterococcus faecalis (strain ATCC 700802 / V583).